A 419-amino-acid polypeptide reads, in one-letter code: Phosphoribosylamine--glycine ligase (419 aa).

Residues 109 to 311 enclose the ATP-grasp domain; sequence KQLLIEAGVP…LEKVLMACVE (203 aa). ATP is bound at residue 135–191; that stretch reads ATKMGAPIVVKADGLAAGKGVIVAQTSAEATTAIAELFDQGFEKIVVEEFLPGEEVS. Residues glutamate 281 and asparagine 283 each contribute to the Mg(2+) site.

This sequence belongs to the GARS family. The cofactor is Mg(2+). Mn(2+) is required as a cofactor.

It catalyses the reaction 5-phospho-beta-D-ribosylamine + glycine + ATP = N(1)-(5-phospho-beta-D-ribosyl)glycinamide + ADP + phosphate + H(+). It functions in the pathway purine metabolism; IMP biosynthesis via de novo pathway; N(1)-(5-phospho-D-ribosyl)glycinamide from 5-phospho-alpha-D-ribose 1-diphosphate: step 2/2. This chain is Phosphoribosylamine--glycine ligase, found in Synechocystis sp. (strain ATCC 27184 / PCC 6803 / Kazusa).